Here is a 230-residue protein sequence, read N- to C-terminus: PKHD-type hydroxylase PD_1553 (230 aa).

Positions 78-182 (RTLPPRFNRY…RIASFFWVQS (105 aa)) constitute a Fe2OG dioxygenase domain. Positions 96, 98, and 163 each coordinate Fe cation. Position 173 (Arg173) interacts with 2-oxoglutarate.

Fe(2+) serves as cofactor. It depends on L-ascorbate as a cofactor.

In Xylella fastidiosa (strain Temecula1 / ATCC 700964), this protein is PKHD-type hydroxylase PD_1553.